A 743-amino-acid chain; its full sequence is Fork head transcription factor 1 (743 aa).

The 56-residue stretch at 39–94 (VTMGRKASNSSDCDVHLGDTKAISRQHAKIFYSFPNQRFEISVMGKNGAFVDGEFV) folds into the FHA domain. Disordered stretches follow at residues 214 to 291 (QPPK…ATQK), 411 to 450 (GISA…LQNG), and 529 to 743 (QMQG…SSYT). Over residues 221–230 (VSPSSIQRLS) the composition is skewed to polar residues. Residues 291–385 (KPNLSYANLI…EGNFFRRTKK (95 aa)) constitute a DNA-binding region (fork-head). The segment covering 434 to 443 (SRGENVEDRP) has biased composition (basic and acidic residues). A compositionally biased stretch (low complexity) spans 529 to 539 (QMQGPQQVQQQ). Over residues 562 to 576 (NITSPSPSISVTQRP) the composition is skewed to polar residues. Residues 614–624 (SAGPSSVRSSS) are compositionally biased toward low complexity. Composition is skewed to polar residues over residues 625–643 (YNST…QNLH), 670–686 (TGNQ…ASSF), and 695–726 (ENGS…NSSD).

The protein resides in the nucleus. Acts as a transcriptional activator for ribosomal protein genes (RPG) that contain a HomolE UAS (upstream activating sequence) in addition to a HomolD promoter element; HomolD plays the role of a TATA box in RPG promoters that do not contain a canonical TATA sequence. Binds to HomolE elements with consensus sequence 3'-ACCCTACCCT-5' (or its inverted form AGGGTAGGGT). This chain is Fork head transcription factor 1, found in Schizosaccharomyces pombe (strain 972 / ATCC 24843) (Fission yeast).